Consider the following 624-residue polypeptide: Nif-specific regulatory protein (624 aa).

Residues aspartate 29–valine 171 form the GAF domain. A Sigma-54 factor interaction domain is found at valine 203–threonine 431. ATP contacts are provided by residues glycine 231 to glutamate 238 and alanine 294 to glutamate 303. Positions glutamine 432–leucine 581 are inter-domain linker. A divalent metal cation contacts are provided by cysteine 445 and cysteine 450. Disordered regions lie at residues valine 477–glycine 508 and alanine 549–serine 578. A compositionally biased stretch (low complexity) spans alanine 549–alanine 563. Positions arginine 582 to phenylalanine 624 are C-terminal DNA-binding domain. Residues glutamine 596–arginine 615 constitute a DNA-binding region (H-T-H motif).

As to quaternary structure, interacts with sigma-54.

Its function is as follows. Required for activation of most nif operons, which are directly involved in nitrogen fixation. This is Nif-specific regulatory protein (nifA) from Azospirillum lipoferum.